The following is a 113-amino-acid chain: Photosystem II reaction center Psb28 protein (113 aa).

Belongs to the Psb28 family. Part of the photosystem II complex.

The protein resides in the cellular thylakoid membrane. The chain is Photosystem II reaction center Psb28 protein from Nostoc punctiforme (strain ATCC 29133 / PCC 73102).